The chain runs to 957 residues: Glycine dehydrogenase (decarboxylating) (957 aa).

At Lys-708 the chain carries N6-(pyridoxal phosphate)lysine.

It belongs to the GcvP family. In terms of assembly, the glycine cleavage system is composed of four proteins: P, T, L and H. Pyridoxal 5'-phosphate serves as cofactor.

The enzyme catalyses N(6)-[(R)-lipoyl]-L-lysyl-[glycine-cleavage complex H protein] + glycine + H(+) = N(6)-[(R)-S(8)-aminomethyldihydrolipoyl]-L-lysyl-[glycine-cleavage complex H protein] + CO2. The glycine cleavage system catalyzes the degradation of glycine. The P protein binds the alpha-amino group of glycine through its pyridoxal phosphate cofactor; CO(2) is released and the remaining methylamine moiety is then transferred to the lipoamide cofactor of the H protein. This Enterobacter sp. (strain 638) protein is Glycine dehydrogenase (decarboxylating).